The sequence spans 338 residues: tRNA(Ile)-lysidine synthase (338 aa).

23–28 contributes to the ATP binding site; sequence SGGLDS.

This sequence belongs to the tRNA(Ile)-lysidine synthase family.

It is found in the cytoplasm. It carries out the reaction cytidine(34) in tRNA(Ile2) + L-lysine + ATP = lysidine(34) in tRNA(Ile2) + AMP + diphosphate + H(+). Ligates lysine onto the cytidine present at position 34 of the AUA codon-specific tRNA(Ile) that contains the anticodon CAU, in an ATP-dependent manner. Cytidine is converted to lysidine, thus changing the amino acid specificity of the tRNA from methionine to isoleucine. The protein is tRNA(Ile)-lysidine synthase of Helicobacter pylori (strain J99 / ATCC 700824) (Campylobacter pylori J99).